A 21-amino-acid polypeptide reads, in one-letter code: Nucleoside diphosphate kinase (21 aa).

Histidine 4 (pros-phosphohistidine intermediate) is an active-site residue.

It belongs to the NDK family. Homohexamer. The cofactor is Mg(2+).

The protein localises to the cytoplasm. It carries out the reaction a 2'-deoxyribonucleoside 5'-diphosphate + ATP = a 2'-deoxyribonucleoside 5'-triphosphate + ADP. It catalyses the reaction a ribonucleoside 5'-diphosphate + ATP = a ribonucleoside 5'-triphosphate + ADP. In terms of biological role, major role in the synthesis of nucleoside triphosphates other than ATP. The ATP gamma phosphate is transferred to the NDP beta phosphate via a ping-pong mechanism, using a phosphorylated active-site intermediate. The chain is Nucleoside diphosphate kinase (NDK1) from Candida albicans (Yeast).